The primary structure comprises 561 residues: DNA ligase B (561 aa).

Residue lysine 125 is the N6-AMP-lysine intermediate of the active site.

This sequence belongs to the NAD-dependent DNA ligase family. LigB subfamily.

It carries out the reaction NAD(+) + (deoxyribonucleotide)n-3'-hydroxyl + 5'-phospho-(deoxyribonucleotide)m = (deoxyribonucleotide)n+m + AMP + beta-nicotinamide D-nucleotide.. Catalyzes the formation of phosphodiester linkages between 5'-phosphoryl and 3'-hydroxyl groups in double-stranded DNA using NAD as a coenzyme and as the energy source for the reaction. This chain is DNA ligase B, found in Salmonella agona (strain SL483).